The following is a 127-amino-acid chain: Large ribosomal subunit protein bL17 (127 aa).

The protein belongs to the bacterial ribosomal protein bL17 family. Part of the 50S ribosomal subunit. Contacts protein L32.

The protein is Large ribosomal subunit protein bL17 of Aeromonas hydrophila subsp. hydrophila (strain ATCC 7966 / DSM 30187 / BCRC 13018 / CCUG 14551 / JCM 1027 / KCTC 2358 / NCIMB 9240 / NCTC 8049).